Here is a 568-residue protein sequence, read N- to C-terminus: 2-succinyl-5-enolpyruvyl-6-hydroxy-3-cyclohexene-1-carboxylate synthase (568 aa).

It belongs to the TPP enzyme family. MenD subfamily. Homodimer. Mg(2+) serves as cofactor. Mn(2+) is required as a cofactor. It depends on thiamine diphosphate as a cofactor.

The catalysed reaction is isochorismate + 2-oxoglutarate + H(+) = 5-enolpyruvoyl-6-hydroxy-2-succinyl-cyclohex-3-ene-1-carboxylate + CO2. Its pathway is quinol/quinone metabolism; 1,4-dihydroxy-2-naphthoate biosynthesis; 1,4-dihydroxy-2-naphthoate from chorismate: step 2/7. It functions in the pathway quinol/quinone metabolism; menaquinone biosynthesis. Catalyzes the thiamine diphosphate-dependent decarboxylation of 2-oxoglutarate and the subsequent addition of the resulting succinic semialdehyde-thiamine pyrophosphate anion to isochorismate to yield 2-succinyl-5-enolpyruvyl-6-hydroxy-3-cyclohexene-1-carboxylate (SEPHCHC). The polypeptide is 2-succinyl-5-enolpyruvyl-6-hydroxy-3-cyclohexene-1-carboxylate synthase (Actinobacillus pleuropneumoniae serotype 7 (strain AP76)).